The following is a 307-amino-acid chain: Delta-9 acyl-lipid desaturase 2 (307 aa).

Residues 1–17 (MSVTSTVEENHQKNPST) show a composition bias toward polar residues. The disordered stretch occupies residues 1–21 (MSVTSTVEENHQKNPSTPAAV). Residues 53-73 (LALLAPFYFTWSALWVTFLFY) form a helical membrane-spanning segment. Fe cation is bound by residues histidine 85 and histidine 90. The short motif at 85 to 90 (HRNLAH) is the Histidine box-1 element. Residues 99–119 (LEYLLAYCALLAIQGDPIDWV) form a helical membrane-spanning segment. Fe cation-binding residues include histidine 122, histidine 125, and histidine 126. The short motif at 122–126 (HRYHH) is the Histidine box-2 element. Helical transmembrane passes span 182 to 202 (VLFH…MSFV) and 204 to 224 (WGMG…NSLC). Histidine 225, histidine 254, histidine 257, and histidine 258 together coordinate Fe cation. Positions 254-258 (HNNHH) match the Histidine box-3 motif.

It belongs to the fatty acid desaturase type 1 family. Fe cation is required as a cofactor. In terms of tissue distribution, strongly expressed in flowers, roots, leaves, seedpods, and inflorescence meristems.

The protein localises to the endoplasmic reticulum membrane. The enzyme catalyses a 1-hexacosanoyl-2-acyl-phosphoglycerolipid + 2 Fe(II)-[cytochrome b5] + O2 + 2 H(+) = a 1-[(17Z)-hexacos-17-enoyl]-2-acyl-phosphoglycerolipid + 2 Fe(III)-[cytochrome b5] + 2 H2O. The catalysed reaction is a 1-tetracosanoyl-2-acyl-phosphoglycerolipid + 2 Fe(II)-[cytochrome b5] + O2 + 2 H(+) = a 1-[(15Z)-tetracos-15-enoyl]-2-acyl-phosphoglycerolipid + 2 Fe(III)-[cytochrome b5] + 2 H2O. Its pathway is lipid metabolism; polyunsaturated fatty acid biosynthesis. Its function is as follows. Involved in delta-9 desaturation of fatty acids. Plays a role in the production of very-long-chain monounsaturated fatty acids (VLCMUFAs) in seed lipids and in membrane phospholipids and sphingolipids. Acts as C-16:0 desaturase for monogalactosyl diacylglycerol (MGDG) and phosphatidylglycerol (PG). Is an essential component for cold adaptation. Is essential to adjust the acyl composition of organelle membrane lipid composition in response to cold stress. This chain is Delta-9 acyl-lipid desaturase 2, found in Arabidopsis thaliana (Mouse-ear cress).